The chain runs to 177 residues: Tail tube protein (177 aa).

The protein belongs to the T4-like viruses Gp19 protein family.

The protein localises to the virion. Structural component of the bacteriophage tail which consists of a contractile sheath, a tube and a baseplate. The central cylindrical segment of the tail consists of a rigid tube, composed of multiple copies of the tail tube protein. During infection, contraction of the sheath drives the central tube through the host outer membrane, creating a channel for DNA ejection from the capsid into the host cell. The protein is Tail tube protein of Serratia marcescens (Serratia marcescens bacteriophage KSP90).